The chain runs to 627 residues: (-)-alpha-pinene synthase 2, chloroplastic (627 aa).

The transit peptide at 1–36 (MALVSVAPMASRSCLHKSLSSSAHELKTICRTIPTL) directs the protein to the chloroplast. The Mg(2+) site is built by Asp-378, Asp-382, and Asp-530. Positions 378–382 (DDMYD) match the DDXXD motif motif.

This sequence belongs to the terpene synthase family. Tpsd subfamily. It depends on Mg(2+) as a cofactor. Mn(2+) is required as a cofactor.

The protein resides in the plastid. The protein localises to the chloroplast. It carries out the reaction (2E)-geranyl diphosphate = (1S,5S)-alpha-pinene + diphosphate. The catalysed reaction is (2E)-geranyl diphosphate = (1S,5S)-beta-pinene + diphosphate. Its pathway is terpene metabolism; oleoresin biosynthesis. Its function is as follows. Involved in defensive oleoresin formation in conifers in response to insect attack or other injury. Involved in monoterpene (C10) olefins biosynthesis. A mixture of alpha- and beta-pinene (35:10) is produced by this enzyme. In Picea sitchensis (Sitka spruce), this protein is (-)-alpha-pinene synthase 2, chloroplastic.